The chain runs to 130 residues: Small ribosomal subunit protein uS8 (130 aa).

This sequence belongs to the universal ribosomal protein uS8 family. In terms of assembly, part of the 30S ribosomal subunit. Contacts proteins S5 and S12.

Its function is as follows. One of the primary rRNA binding proteins, it binds directly to 16S rRNA central domain where it helps coordinate assembly of the platform of the 30S subunit. This chain is Small ribosomal subunit protein uS8, found in Shewanella sediminis (strain HAW-EB3).